Consider the following 83-residue polypeptide: Small ribosomal subunit protein uS19m (83 aa).

Belongs to the universal ribosomal protein uS19 family.

The protein localises to the mitochondrion. The sequence is that of Small ribosomal subunit protein uS19m (RPS19) from Tetraselmis subcordiformis (Marine green alga).